Reading from the N-terminus, the 226-residue chain is Enolase-phosphatase E1 (226 aa).

It belongs to the HAD-like hydrolase superfamily. MasA/MtnC family. As to quaternary structure, monomer. Mg(2+) serves as cofactor.

It catalyses the reaction 5-methylsulfanyl-2,3-dioxopentyl phosphate + H2O = 1,2-dihydroxy-5-(methylsulfanyl)pent-1-en-3-one + phosphate. The protein operates within amino-acid biosynthesis; L-methionine biosynthesis via salvage pathway; L-methionine from S-methyl-5-thio-alpha-D-ribose 1-phosphate: step 3/6. It participates in amino-acid biosynthesis; L-methionine biosynthesis via salvage pathway; L-methionine from S-methyl-5-thio-alpha-D-ribose 1-phosphate: step 4/6. Functionally, bifunctional enzyme that catalyzes the enolization of 2,3-diketo-5-methylthiopentyl-1-phosphate (DK-MTP-1-P) into the intermediate 2-hydroxy-3-keto-5-methylthiopentenyl-1-phosphate (HK-MTPenyl-1-P), which is then dephosphorylated to form the acireductone 1,2-dihydroxy-3-keto-5-methylthiopentene (DHK-MTPene). This Shewanella sp. (strain W3-18-1) protein is Enolase-phosphatase E1.